Consider the following 397-residue polypeptide: Carbamoyl phosphate synthase small chain (397 aa).

The segment at 1-204 (MSPLLPSFPF…PAYRTLDTSK (204 aa)) is CPSase. S53, G256, and G258 together coordinate L-glutamine. Residues 208 to 395 (KVVAYDFGVK…MELMNAAKKE (188 aa)) form the Glutamine amidotransferase type-1 domain. Residue C284 is the Nucleophile of the active site. L-glutamine contacts are provided by L285, Q288, N326, G328, and F329. Residues H368 and E370 contribute to the active site.

The protein belongs to the CarA family. In terms of assembly, composed of two chains; the small (or glutamine) chain promotes the hydrolysis of glutamine to ammonia, which is used by the large (or ammonia) chain to synthesize carbamoyl phosphate. Tetramer of heterodimers (alpha,beta)4.

It carries out the reaction hydrogencarbonate + L-glutamine + 2 ATP + H2O = carbamoyl phosphate + L-glutamate + 2 ADP + phosphate + 2 H(+). The catalysed reaction is L-glutamine + H2O = L-glutamate + NH4(+). The protein operates within amino-acid biosynthesis; L-arginine biosynthesis; carbamoyl phosphate from bicarbonate: step 1/1. It participates in pyrimidine metabolism; UMP biosynthesis via de novo pathway; (S)-dihydroorotate from bicarbonate: step 1/3. In terms of biological role, small subunit of the glutamine-dependent carbamoyl phosphate synthetase (CPSase). CPSase catalyzes the formation of carbamoyl phosphate from the ammonia moiety of glutamine, carbonate, and phosphate donated by ATP, constituting the first step of 2 biosynthetic pathways, one leading to arginine and/or urea and the other to pyrimidine nucleotides. The small subunit (glutamine amidotransferase) binds and cleaves glutamine to supply the large subunit with the substrate ammonia. The polypeptide is Carbamoyl phosphate synthase small chain (Polynucleobacter asymbioticus (strain DSM 18221 / CIP 109841 / QLW-P1DMWA-1) (Polynucleobacter necessarius subsp. asymbioticus)).